Reading from the N-terminus, the 22-residue chain is Malate dehydrogenase (22 aa).

Residue 9 to 15 (GAAGQIG) coordinates NAD(+).

The protein belongs to the LDH/MDH superfamily. MDH type 2 family.

The catalysed reaction is (S)-malate + NAD(+) = oxaloacetate + NADH + H(+). In terms of biological role, catalyzes the reversible oxidation of malate to oxaloacetate. This Actinoplanes missouriensis protein is Malate dehydrogenase (mdh).